We begin with the raw amino-acid sequence, 398 residues long: MSVIYLDNNATTQVDAEVLAAMLPYLTEFYGNPSSMHTFGGQVGKAVQQARGQVAFLLGAEESEIIFTSCGTEGNNAAIKAALAAQPEKRHIITTQVEHAAIINVCKQLEKQGYKVTYLSVDSQGQIDLLELEAALTGDTALVSTMYANNETGVVFPIEQIGLRAKDAGAIFHVDAVQAVGKVPLNLKTSSIDMLTLSGHKLHAPKGIGALYIRRGVRFRPLLVGGHQERGRRAGTENVPGMIALGKAAELAQIHLKDVKREKALRDRLEQGLLSAIPNTEVNGHPTSRLSNTTNIGFKYIEGEAILLSLNKYGICASSGSACTSGSLESSHVLRAMGLPYTILHGSIRFSLSRYTTEAEIDKVLQLMPPIVERLRAISPFSNDQADWLQGREEALAH.

Pyridoxal 5'-phosphate contacts are provided by residues 71–72 (GT), N150, Q178, and 198–200 (SGH). K201 carries the N6-(pyridoxal phosphate)lysine modification. T236 is a binding site for pyridoxal 5'-phosphate. Residue C323 is the Cysteine persulfide intermediate of the active site. Residue C323 participates in [2Fe-2S] cluster binding.

Belongs to the class-V pyridoxal-phosphate-dependent aminotransferase family. NifS/IscS subfamily. As to quaternary structure, homodimer. The cofactor is pyridoxal 5'-phosphate.

The enzyme catalyses (sulfur carrier)-H + L-cysteine = (sulfur carrier)-SH + L-alanine. Its function is as follows. Catalyzes the removal of elemental sulfur atoms from cysteine to produce alanine. Seems to participate in the biosynthesis of the nitrogenase metalloclusters by providing the inorganic sulfur required for the Fe-S core formation. This is Cysteine desulfurase 2 from Trichormus variabilis (strain ATCC 29413 / PCC 7937) (Anabaena variabilis).